We begin with the raw amino-acid sequence, 360 residues long: ACT1-like protein (360 aa).

A disordered region spans residues 339-360; the sequence is KKQSHNNANDHHEDSMNYSITQ.

Interacts with the receptor complex composed of ilcr-1 and ilcr-2. Also interacts with pik-1. In terms of tissue distribution, expressed in neurons.

Its function is as follows. May act as an adapter to facilitate downstream signaling for the receptor complex composed of ilcr-1 and ilcr-2, which is a signaling complex that modulates neuronal activity and animal behavior in response to sensory neuron input. The chain is ACT1-like protein from Caenorhabditis elegans.